The chain runs to 339 residues: tRNA-dihydrouridine(20/20a) synthase (339 aa).

FMN contacts are provided by residues Pro26–Leu28 and Gln78. The active-site Proton donor is Cys108. Residues Lys147, His180, Asn220–Gly222, and Gly242–Arg243 contribute to the FMN site.

The protein belongs to the Dus family. DusA subfamily. Requires FMN as cofactor.

It carries out the reaction 5,6-dihydrouridine(20) in tRNA + NADP(+) = uridine(20) in tRNA + NADPH + H(+). It catalyses the reaction 5,6-dihydrouridine(20) in tRNA + NAD(+) = uridine(20) in tRNA + NADH + H(+). The catalysed reaction is 5,6-dihydrouridine(20a) in tRNA + NADP(+) = uridine(20a) in tRNA + NADPH + H(+). The enzyme catalyses 5,6-dihydrouridine(20a) in tRNA + NAD(+) = uridine(20a) in tRNA + NADH + H(+). Functionally, catalyzes the synthesis of 5,6-dihydrouridine (D), a modified base found in the D-loop of most tRNAs, via the reduction of the C5-C6 double bond in target uridines. Specifically modifies U20 and U20a in tRNAs. This Shigella flexneri protein is tRNA-dihydrouridine(20/20a) synthase.